A 75-amino-acid chain; its full sequence is UPF0352 protein YPTB1297 (75 aa).

Belongs to the UPF0352 family.

The chain is UPF0352 protein YPTB1297 from Yersinia pseudotuberculosis serotype I (strain IP32953).